The sequence spans 332 residues: Large ribosomal subunit protein mL44 (332 aa).

The transit peptide at 1-30 directs the protein to the mitochondrion; that stretch reads MASGLVRLLQQGHRCLLAPVAPKLVPPVRG. In terms of domain architecture, RNase III spans 86-228; sequence DLLKTAFVNS…LITQMTGKEL (143 aa). Positions 236–306 constitute a DRBM domain; the sequence is NPMGLLVEEL…ARVALRKLYG (71 aa).

This sequence belongs to the ribonuclease III family. Mitochondrion-specific ribosomal protein mL44 subfamily. As to quaternary structure, component of the mitochondrial large ribosomal subunit (mt-LSU). Mature mammalian 55S mitochondrial ribosomes consist of a small (28S) and a large (39S) subunit. The 28S small subunit contains a 12S ribosomal RNA (12S mt-rRNA) and 30 different proteins. The 39S large subunit contains a 16S rRNA (16S mt-rRNA), a copy of mitochondrial valine transfer RNA (mt-tRNA(Val)), which plays an integral structural role, and 52 different proteins.

It localises to the mitochondrion. In terms of biological role, component of the 39S subunit of mitochondrial ribosome. May have a function in the assembly/stability of nascent mitochondrial polypeptides exiting the ribosome. This is Large ribosomal subunit protein mL44 (MRPL44) from Homo sapiens (Human).